We begin with the raw amino-acid sequence, 404 residues long: Argininosuccinate synthase (404 aa).

ATP contacts are provided by residues 10 to 18 (AFSGGLDTS) and Ala37. The L-citrulline site is built by Tyr88 and Ser93. Residue Gly118 coordinates ATP. L-aspartate-binding residues include Thr120, Asn124, and Asp125. L-citrulline is bound at residue Asn124. Arg128, Ser179, Ser188, Glu264, and Tyr276 together coordinate L-citrulline.

Belongs to the argininosuccinate synthase family. Type 1 subfamily. Homotetramer.

The protein localises to the cytoplasm. It carries out the reaction L-citrulline + L-aspartate + ATP = 2-(N(omega)-L-arginino)succinate + AMP + diphosphate + H(+). It participates in amino-acid biosynthesis; L-arginine biosynthesis; L-arginine from L-ornithine and carbamoyl phosphate: step 2/3. The polypeptide is Argininosuccinate synthase (Nitrosomonas eutropha (strain DSM 101675 / C91 / Nm57)).